The chain runs to 423 residues: 26S proteasome regulatory subunit 6A-A (423 aa).

211–218 (GPPGTGKT) contacts ATP.

It belongs to the AAA ATPase family. As to quaternary structure, may form a heterodimer with a related family member.

The protein localises to the cytoplasm. The protein resides in the nucleus. In terms of biological role, the 26S proteasome is involved in the ATP-dependent degradation of ubiquitinated proteins. The regulatory (or ATPase) complex confers ATP dependency and substrate specificity to the 26S complex. This chain is 26S proteasome regulatory subunit 6A-A, found in Xenopus laevis (African clawed frog).